Consider the following 260-residue polypeptide: Cytochrome c oxidase subunit 3 (260 aa).

Topologically, residues 1-15 are mitochondrial matrix; the sequence is MAHQAHAYHMVDPSP. Residues 16 to 34 traverse the membrane as a helical segment; sequence WPLTGAVAALLLTSGLAMW. Residues 35–40 are Mitochondrial intermembrane-facing; it reads FHFGSM. The helical transmembrane segment at 41-66 threads the bilayer; the sequence is ILLTLGLITMVLTMIQWWRDVIREGT. Residues 67-72 lie on the Mitochondrial matrix side of the membrane; the sequence is FQGHHT. The chain crosses the membrane as a helical span at residues 73 to 105; it reads PPVQKGLRYGMILFITSEVFFFIGFFWAFYNSS. Topologically, residues 106 to 128 are mitochondrial intermembrane; sequence LAPTYELGECWPPTGITPLNPFE. The helical transmembrane segment at 129-152 threads the bilayer; the sequence is VPLLNTAVLLASGVTVTWAHHSIM. The Mitochondrial matrix portion of the chain corresponds to 153–155; that stretch reads HGD. The chain crosses the membrane as a helical span at residues 156-183; that stretch reads RKEAIQSLTLTILLGLYFTALQAMEYYE. The Mitochondrial intermembrane segment spans residues 184–190; that stretch reads APFTIAD. A helical transmembrane segment spans residues 191–223; it reads GVYGSTFFVATGFHGLHVIIGSLFLSVCLLRQI. Over 224–232 the chain is Mitochondrial matrix; it reads QYHFTSKHH. Residues 233-255 traverse the membrane as a helical segment; it reads FGFEAAWYWHFVDVVWLFLYVSI. Residues 256–260 are Mitochondrial intermembrane-facing; it reads YWWGS.

This sequence belongs to the cytochrome c oxidase subunit 3 family. In terms of assembly, component of the cytochrome c oxidase (complex IV, CIV), a multisubunit enzyme composed of 14 subunits. The complex is composed of a catalytic core of 3 subunits MT-CO1, MT-CO2 and MT-CO3, encoded in the mitochondrial DNA, and 11 supernumerary subunits COX4I, COX5A, COX5B, COX6A, COX6B, COX6C, COX7A, COX7B, COX7C, COX8 and NDUFA4, which are encoded in the nuclear genome. The complex exists as a monomer or a dimer and forms supercomplexes (SCs) in the inner mitochondrial membrane with NADH-ubiquinone oxidoreductase (complex I, CI) and ubiquinol-cytochrome c oxidoreductase (cytochrome b-c1 complex, complex III, CIII), resulting in different assemblies (supercomplex SCI(1)III(2)IV(1) and megacomplex MCI(2)III(2)IV(2)).

The protein resides in the mitochondrion inner membrane. It carries out the reaction 4 Fe(II)-[cytochrome c] + O2 + 8 H(+)(in) = 4 Fe(III)-[cytochrome c] + 2 H2O + 4 H(+)(out). In terms of biological role, component of the cytochrome c oxidase, the last enzyme in the mitochondrial electron transport chain which drives oxidative phosphorylation. The respiratory chain contains 3 multisubunit complexes succinate dehydrogenase (complex II, CII), ubiquinol-cytochrome c oxidoreductase (cytochrome b-c1 complex, complex III, CIII) and cytochrome c oxidase (complex IV, CIV), that cooperate to transfer electrons derived from NADH and succinate to molecular oxygen, creating an electrochemical gradient over the inner membrane that drives transmembrane transport and the ATP synthase. Cytochrome c oxidase is the component of the respiratory chain that catalyzes the reduction of oxygen to water. Electrons originating from reduced cytochrome c in the intermembrane space (IMS) are transferred via the dinuclear copper A center (CU(A)) of subunit 2 and heme A of subunit 1 to the active site in subunit 1, a binuclear center (BNC) formed by heme A3 and copper B (CU(B)). The BNC reduces molecular oxygen to 2 water molecules using 4 electrons from cytochrome c in the IMS and 4 protons from the mitochondrial matrix. This chain is Cytochrome c oxidase subunit 3 (mt-co3), found in Xenopus laevis (African clawed frog).